Reading from the N-terminus, the 471-residue chain is Glutamate--tRNA ligase (471 aa).

Positions 9–19 (PSPTGFLHVGG) match the 'HIGH' region motif. Residues Cys98, Cys100, Cys125, and Asp127 each coordinate Zn(2+). The 'KMSKS' region signature appears at 237-241 (KLSKR). Position 240 (Lys240) interacts with ATP.

It belongs to the class-I aminoacyl-tRNA synthetase family. Glutamate--tRNA ligase type 1 subfamily. As to quaternary structure, monomer. Zn(2+) serves as cofactor.

It localises to the cytoplasm. It carries out the reaction tRNA(Glu) + L-glutamate + ATP = L-glutamyl-tRNA(Glu) + AMP + diphosphate. In terms of biological role, catalyzes the attachment of glutamate to tRNA(Glu) in a two-step reaction: glutamate is first activated by ATP to form Glu-AMP and then transferred to the acceptor end of tRNA(Glu). This Aeromonas salmonicida (strain A449) protein is Glutamate--tRNA ligase.